The following is a 65-amino-acid chain: Large ribosomal subunit protein bL35 (65 aa).

Residues 1 to 52 form a disordered region; sequence MPKIKTNRGAAKRFKRTGSGGFKCVQSHRRHILTKKSTKRKRQLRSPDMVHP. Residues 26 to 44 show a composition bias toward basic residues; sequence QSHRRHILTKKSTKRKRQL.

Belongs to the bacterial ribosomal protein bL35 family.

In Methylococcus capsulatus (strain ATCC 33009 / NCIMB 11132 / Bath), this protein is Large ribosomal subunit protein bL35.